The following is a 324-amino-acid chain: uncharacterized protein (324 aa).

The HTH lysR-type domain occupies 1–58 (MDIKVMEYAAEIARRQSFTKAAEHLHIAQPSLSQQIKKLEAELGLTLFHRSHGSVTLT). Residues 18–37 (FTKAAEHLHIAQPSLSQQIK) constitute a DNA-binding region (H-T-H motif).

The protein belongs to the LysR transcriptional regulatory family.

This is an uncharacterized protein from Bacillus subtilis (strain 168).